Reading from the N-terminus, the 204-residue chain is MARIEAPQDALGRLIEALRVLPGVGPKSAQRMAFYLLQHDRNGAAVLAQSLGEAVETVGHCACCNTFSETQVCSTCSDERRDPSLLCIVETPADQVMVEQTLSFKGNYFVLMGRLSPLDGMGPNEISFDRLLNRIETPDTGVPIREVVLATNFTSEGEATAHYIGEVLKPKGIKVTRIARGIPVGGELEYVDAGTLARALMDRR.

A C4-type zinc finger spans residues 61–76 (CACCNTFSETQVCSTC). The Toprim domain occupies 84–183 (SLLCIVETPA…KVTRIARGIP (100 aa)).

Belongs to the RecR family.

Its function is as follows. May play a role in DNA repair. It seems to be involved in an RecBC-independent recombinational process of DNA repair. It may act with RecF and RecO. This Polynucleobacter necessarius subsp. necessarius (strain STIR1) protein is Recombination protein RecR.